We begin with the raw amino-acid sequence, 174 residues long: Large ribosomal subunit protein uL10 (174 aa).

This sequence belongs to the universal ribosomal protein uL10 family. As to quaternary structure, part of the ribosomal stalk of the 50S ribosomal subunit. The N-terminus interacts with L11 and the large rRNA to form the base of the stalk. The C-terminus forms an elongated spine to which L12 dimers bind in a sequential fashion forming a multimeric L10(L12)X complex.

Forms part of the ribosomal stalk, playing a central role in the interaction of the ribosome with GTP-bound translation factors. In Anaeromyxobacter dehalogenans (strain 2CP-1 / ATCC BAA-258), this protein is Large ribosomal subunit protein uL10.